The primary structure comprises 226 residues: Small ribosomal subunit protein uS3 (226 aa).

In terms of domain architecture, KH type-2 spans Ile-39–Thr-109.

This sequence belongs to the universal ribosomal protein uS3 family. Part of the 30S ribosomal subunit. Forms a tight complex with proteins S10 and S14.

Its function is as follows. Binds the lower part of the 30S subunit head. Binds mRNA in the 70S ribosome, positioning it for translation. This Mycoplasmopsis synoviae (strain 53) (Mycoplasma synoviae) protein is Small ribosomal subunit protein uS3.